The following is a 111-amino-acid chain: Photosystem II reaction center Psb28 protein (111 aa).

Belongs to the Psb28 family. As to quaternary structure, part of the photosystem II complex.

The protein resides in the cellular thylakoid membrane. This Gloeothece citriformis (strain PCC 7424) (Cyanothece sp. (strain PCC 7424)) protein is Photosystem II reaction center Psb28 protein.